A 205-amino-acid polypeptide reads, in one-letter code: Probable anaerobic dimethyl sulfoxide reductase chain YnfG (205 aa).

3 consecutive 4Fe-4S ferredoxin-type domains span residues 5–33 (YGFF…LGPE), 59–89 (FAYY…KRED), and 90–119 (GFVV…YNAE). Residues cysteine 14, cysteine 17, cysteine 20, cysteine 24, cysteine 67, cysteine 70, cysteine 75, cysteine 79, cysteine 99, cysteine 102, cysteine 105, cysteine 109, cysteine 126, cysteine 129, cysteine 141, and cysteine 145 each coordinate [4Fe-4S] cluster. The disordered stretch occupies residues 183–205 (IKPNANSRPTGDTTGYLANPEEV). Polar residues predominate over residues 186–195 (NANSRPTGDT).

As to quaternary structure, the complex consists of three subunits: YnfF, the reductase; YnfG, an electron transfer protein, and YnfH, a membrane anchor protein. [4Fe-4S] cluster is required as a cofactor.

Functionally, electron transfer subunit of the terminal reductase during anaerobic growth on various sulfoxide and N-oxide compounds. This is Probable anaerobic dimethyl sulfoxide reductase chain YnfG (ynfG) from Escherichia coli O6:H1 (strain CFT073 / ATCC 700928 / UPEC).